The sequence spans 37 residues: Cytochrome b6-f complex subunit 5 (37 aa).

The chain crosses the membrane as a helical span at residues 5 to 25; the sequence is LLSGIVLGLITVSALGLFVAA.

Belongs to the PetG family. As to quaternary structure, the 4 large subunits of the cytochrome b6-f complex are cytochrome b6, subunit IV (17 kDa polypeptide, PetD), cytochrome f and the Rieske protein, while the 4 small subunits are PetG, PetL, PetM and PetN. The complex functions as a dimer.

Its subcellular location is the plastid. It localises to the chloroplast thylakoid membrane. Its function is as follows. Component of the cytochrome b6-f complex, which mediates electron transfer between photosystem II (PSII) and photosystem I (PSI), cyclic electron flow around PSI, and state transitions. PetG is required for either the stability or assembly of the cytochrome b6-f complex. In Phaeodactylum tricornutum (strain CCAP 1055/1), this protein is Cytochrome b6-f complex subunit 5.